The primary structure comprises 415 residues: uncharacterized protein (415 aa).

His88 is a Zn(2+) binding site. Residue Asp90 is part of the active site. Zn(2+) is bound at residue Asp121. The active-site Proton acceptor is the Glu155. 3 residues coordinate Zn(2+): Glu156, Asp185, and His392.

The protein belongs to the peptidase M20A family. Zn(2+) is required as a cofactor. Requires Co(2+) as cofactor.

This is an uncharacterized protein from Methanococcus maripaludis (strain DSM 14266 / JCM 13030 / NBRC 101832 / S2 / LL).